The sequence spans 226 residues: DNA mismatch repair protein MutH (226 aa).

Belongs to the MutH family.

The protein resides in the cytoplasm. In terms of biological role, sequence-specific endonuclease that cleaves unmethylated GATC sequences. It is involved in DNA mismatch repair. This is DNA mismatch repair protein MutH from Actinobacillus pleuropneumoniae serotype 3 (strain JL03).